Consider the following 394-residue polypeptide: Thioredoxin-interacting protein (394 aa).

Lys212 is covalently cross-linked (Glycyl lysine isopeptide (Lys-Gly) (interchain with G-Cter in ubiquitin)). Ser361 is modified (phosphoserine).

Belongs to the arrestin family. Homodimer; disulfide-linked. Interacts with TXN/thioredoxin through its redox-active site. Interacts with transcriptional repressors ZBTB16, ZBTB32 and HDAC1. Interacts with DDIT4. In terms of processing, ubiquitinated; undergoes heterotypic 'Lys-48'-/'Lys-63'-branched polyubiquitination catalyzed by ITCH and UBR5 resulting in proteasomal degradation. Deubiquitinated by USP5, leading to TXNIP stabilization.

Its subcellular location is the cytoplasm. Its function is as follows. May act as an oxidative stress mediator by inhibiting thioredoxin activity or by limiting its bioavailability. Interacts with COPS5 and restores COPS5-induced suppression of CDKN1B stability, blocking the COPS5-mediated translocation of CDKN1B from the nucleus to the cytoplasm. Functions as a transcriptional repressor, possibly by acting as a bridge molecule between transcription factors and corepressor complexes, and over-expression will induce G0/G1 cell cycle arrest. Required for the maturation of natural killer cells. Acts as a suppressor of tumor cell growth. Inhibits the proteasomal degradation of DDIT4, and thereby contributes to the inhibition of the mammalian target of rapamycin complex 1 (mTORC1). In Rattus norvegicus (Rat), this protein is Thioredoxin-interacting protein (Txnip).